The following is a 634-amino-acid chain: Chaperone protein HtpG (634 aa).

Residues 1–345 are a; substrate-binding; sequence MEHQQNHTFS…SNDLPLNVSR (345 aa). The tract at residues 346–562 is b; the sequence is EILQDTRVTA…NDDMSTQMAK (217 aa). Positions 563-634 are c; that stretch reads LMAQMGQPVP…VGRINKLLLA (72 aa).

This sequence belongs to the heat shock protein 90 family. In terms of assembly, homodimer.

Its subcellular location is the cytoplasm. Functionally, molecular chaperone. Has ATPase activity. The sequence is that of Chaperone protein HtpG from Psychromonas ingrahamii (strain DSM 17664 / CCUG 51855 / 37).